Here is a 277-residue protein sequence, read N- to C-terminus: Uridine-cytidine kinase 1 (277 aa).

The segment at 1 to 30 is disordered; it reads MASAGGEDCESPAPEADRPHQRPFLIGVSG. 30–38 provides a ligand contact to ATP; it reads GGTASGKST. The active site involves D65. Substrate-binding residues include D87, Y115, H120, R169, R178, and Q186. D215 provides a ligand contact to ATP. The interval 247–277 is disordered; it reads SYKRTFSEPGDHPGMLTSGKRSHLESSSRPH. T251 carries the post-translational modification Phosphothreonine. S253 is subject to Phosphoserine. Basic and acidic residues predominate over residues 268-277; it reads SHLESSSRPH.

Belongs to the uridine kinase family. In terms of tissue distribution, ubiquitous.

The enzyme catalyses uridine + ATP = UMP + ADP + H(+). The catalysed reaction is cytidine + ATP = CMP + ADP + H(+). The protein operates within pyrimidine metabolism; CTP biosynthesis via salvage pathway; CTP from cytidine: step 1/3. Its pathway is pyrimidine metabolism; UMP biosynthesis via salvage pathway; UMP from uridine: step 1/1. In terms of biological role, phosphorylates uridine and cytidine to uridine monophosphate and cytidine monophosphate. Does not phosphorylate deoxyribonucleosides or purine ribonucleosides. Can use ATP or GTP as a phosphate donor. Can also phosphorylate cytidine and uridine nucleoside analogs such as 6-azauridine, 5-fluorouridine, 4-thiouridine, 5-bromouridine, N(4)-acetylcytidine, N(4)-benzoylcytidine, 5-fluorocytidine, 2-thiocytidine, 5-methylcytidine, and N(4)-anisoylcytidine. This Homo sapiens (Human) protein is Uridine-cytidine kinase 1 (UCK1).